Consider the following 240-residue polypeptide: UDP-2,3-diacylglucosamine hydrolase (240 aa).

5 residues coordinate Mn(2+): aspartate 8, histidine 10, aspartate 41, asparagine 79, and histidine 114. 79–80 serves as a coordination point for substrate; it reads NR. Positions 122, 160, 164, 167, and 195 each coordinate substrate. Residues histidine 195 and histidine 197 each coordinate Mn(2+).

This sequence belongs to the LpxH family. It depends on Mn(2+) as a cofactor.

It localises to the cell inner membrane. The catalysed reaction is UDP-2-N,3-O-bis[(3R)-3-hydroxytetradecanoyl]-alpha-D-glucosamine + H2O = 2-N,3-O-bis[(3R)-3-hydroxytetradecanoyl]-alpha-D-glucosaminyl 1-phosphate + UMP + 2 H(+). It participates in glycolipid biosynthesis; lipid IV(A) biosynthesis; lipid IV(A) from (3R)-3-hydroxytetradecanoyl-[acyl-carrier-protein] and UDP-N-acetyl-alpha-D-glucosamine: step 4/6. In terms of biological role, hydrolyzes the pyrophosphate bond of UDP-2,3-diacylglucosamine to yield 2,3-diacylglucosamine 1-phosphate (lipid X) and UMP by catalyzing the attack of water at the alpha-P atom. Involved in the biosynthesis of lipid A, a phosphorylated glycolipid that anchors the lipopolysaccharide to the outer membrane of the cell. The protein is UDP-2,3-diacylglucosamine hydrolase of Shigella dysenteriae serotype 1 (strain Sd197).